The following is a 1117-amino-acid chain: Protein rliB (1117 aa).

The signal sequence occupies residues 1 to 23; it reads MKNINNKILKIFILFLAICSVKS. 4 N-linked (GlcNAc...) asparagine glycosylation sites follow: N136, N195, N279, and N318. The 127-residue stretch at 266-392 folds into the G8 domain; that stretch reads STWSNNLVPQ…YHNSWTKLAS (127 aa). PbH1 repeat units follow at residues 522–544 and 545–567; these read VQKS…TIHG and TNNL…YLED. 2 N-linked (GlcNAc...) asparagine glycosylation sites follow: N547 and N605. A PbH1 3 repeat occupies 621–642; the sequence is NAYNTIIGNSASGGWAGFSFPN. 6 N-linked (GlcNAc...) asparagine glycosylation sites follow: N728, N845, N1030, N1044, N1091, and N1107.

It belongs to the comF family.

Its subcellular location is the secreted. This chain is Protein rliB (rliB), found in Dictyostelium discoideum (Social amoeba).